A 398-amino-acid polypeptide reads, in one-letter code: Cell division protein FtsZ (398 aa).

GTP is bound by residues 24–28, 111–113, E154, R158, and D202; these read GAGGN and GTG. Positions 333–381 are disordered; that stretch reads GRNNKSETSPISQSEDSEKEKFKWPYSQSESTQDKTLETKPAEQVSEGA. Positions 364–373 are enriched in basic and acidic residues; sequence TQDKTLETKP.

Belongs to the FtsZ family. As to quaternary structure, homodimer. Polymerizes to form a dynamic ring structure in a strictly GTP-dependent manner. Interacts directly with several other division proteins.

It localises to the cytoplasm. Essential cell division protein that forms a contractile ring structure (Z ring) at the future cell division site. The regulation of the ring assembly controls the timing and the location of cell division. One of the functions of the FtsZ ring is to recruit other cell division proteins to the septum to produce a new cell wall between the dividing cells. Binds GTP and shows GTPase activity. The protein is Cell division protein FtsZ of Wolbachia sp.